A 185-amino-acid chain; its full sequence is Endoribonuclease YbeY (185 aa).

Zn(2+)-binding residues include His-142, His-146, and His-152.

The protein belongs to the endoribonuclease YbeY family. Requires Zn(2+) as cofactor.

The protein localises to the cytoplasm. Its function is as follows. Single strand-specific metallo-endoribonuclease involved in late-stage 70S ribosome quality control and in maturation of the 3' terminus of the 16S rRNA. This chain is Endoribonuclease YbeY, found in Parvibaculum lavamentivorans (strain DS-1 / DSM 13023 / NCIMB 13966).